Here is a 340-residue protein sequence, read N- to C-terminus: Guanine nucleotide-binding protein subunit beta-4 (340 aa).

Ser-2 bears the N-acetylserine mark. A Phosphoserine modification is found at Ser-2. WD repeat units lie at residues 53–92 (GHLA…KMHA), 95–134 (LRSS…GNVR), 141–179 (GHTG…QTTT), 182–221 (GHSG…CRQS), and 224–263 (GHIS…ELLL). His-266 is modified (phosphohistidine). 2 WD repeats span residues 268–307 (NIIC…RAGV) and 310–339 (GHDN…LRIW).

Belongs to the WD repeat G protein beta family. G proteins are composed of 3 units, alpha, beta and gamma. Widely expressed in the brain. Highest levels found in the hippocampus and layers v and vi of the neocortex.

Functionally, guanine nucleotide-binding proteins (G proteins) are involved as a modulator or transducer in various transmembrane signaling systems. The beta and gamma chains are required for the GTPase activity, for replacement of GDP by GTP, and for G protein-effector interaction. The protein is Guanine nucleotide-binding protein subunit beta-4 (Gnb4) of Rattus norvegicus (Rat).